Here is a 1299-residue protein sequence, read N- to C-terminus: Cilia- and flagella-associated protein 251 (1299 aa).

Residues 1–351 form a disordered region; sequence MSDTEENPLE…SQKPEDILAQ (351 aa). Acidic residues-rich tracts occupy residues 17-45, 91-162, and 176-189; these read EMEE…EEEE, EKEE…EEDA, and ESQE…EWVE. Basic and acidic residues predominate over residues 190–199; that stretch reads KEEQREGEEV. Acidic residues predominate over residues 212 to 228; that stretch reads EEEGWEEEKSGEEEKSE. Residues 229 to 257 are compositionally biased toward basic and acidic residues; that stretch reads ESERSKERGGEEEGQEKEEAEHEGEREEG. The span at 269–280 shows a compositional bias: acidic residues; it reads REEEEEEEDTET. Basic and acidic residues-rich tracts occupy residues 281 to 297 and 331 to 351; these read TETK…EKQN and NSMK…ILAQ. 14 WD repeats span residues 484 to 526, 534 to 574, 585 to 624, 643 to 678, 681 to 741, 745 to 785, 791 to 828, 838 to 874, 881 to 924, 935 to 975, 981 to 1027, 1033 to 1071, 1109 to 1149, and 1169 to 1209; these read PVHT…IWKW, ACTL…CWFE, VLTE…VWDI, PRKL…FYDH, SVVN…VYHM, GTKL…VWDF, LFSR…ILDA, PFKY…MVVV, WEYL…EYNL, LDVH…LFNA, RKTL…ILPV, KTCA…QWKI, YFYY…FYPS, and GKLI…GYTN.

It localises to the cytoplasm. The protein localises to the cytoskeleton. The protein resides in the cilium axoneme. It is found in the cell projection. Its subcellular location is the cilium. It localises to the flagellum. Involved in spermatozoa motility. May also regulate cilium motility through its role in the assembly of the axonemal radial spokes. This Mus musculus (Mouse) protein is Cilia- and flagella-associated protein 251.